The following is a 393-amino-acid chain: NAD(P)H-quinone oxidoreductase subunit H, chloroplastic (393 aa).

This sequence belongs to the complex I 49 kDa subunit family. In terms of assembly, NDH is composed of at least 16 different subunits, 5 of which are encoded in the nucleus.

Its subcellular location is the plastid. It localises to the chloroplast thylakoid membrane. The catalysed reaction is a plastoquinone + NADH + (n+1) H(+)(in) = a plastoquinol + NAD(+) + n H(+)(out). The enzyme catalyses a plastoquinone + NADPH + (n+1) H(+)(in) = a plastoquinol + NADP(+) + n H(+)(out). In terms of biological role, NDH shuttles electrons from NAD(P)H:plastoquinone, via FMN and iron-sulfur (Fe-S) centers, to quinones in the photosynthetic chain and possibly in a chloroplast respiratory chain. The immediate electron acceptor for the enzyme in this species is believed to be plastoquinone. Couples the redox reaction to proton translocation, and thus conserves the redox energy in a proton gradient. This chain is NAD(P)H-quinone oxidoreductase subunit H, chloroplastic, found in Solanum lycopersicum (Tomato).